Here is a 137-residue protein sequence, read N- to C-terminus: Small ribosomal subunit protein uS11 (137 aa).

Residues methionine 1–lysine 11 show a composition bias toward polar residues. Disordered regions lie at residues methionine 1 to alanine 28 and threonine 117 to valine 137. The segment covering lysine 12–lysine 21 has biased composition (basic residues).

The protein belongs to the universal ribosomal protein uS11 family. Part of the 30S ribosomal subunit. Interacts with proteins S7 and S18. Binds to IF-3.

In terms of biological role, located on the platform of the 30S subunit, it bridges several disparate RNA helices of the 16S rRNA. Forms part of the Shine-Dalgarno cleft in the 70S ribosome. This Rhodococcus opacus (strain B4) protein is Small ribosomal subunit protein uS11.